The primary structure comprises 160 residues: Large ribosomal subunit protein uL15 (160 aa).

Over residues 1–14 (MKLNDISDNPGSSK) the composition is skewed to polar residues. A disordered region spans residues 1–35 (MKLNDISDNPGSSKSRMRVGRGIGSGKGKTCGRGV). The segment covering 21–35 (RGIGSGKGKTCGRGV) has biased composition (gly residues).

It belongs to the universal ribosomal protein uL15 family. In terms of assembly, part of the 50S ribosomal subunit.

Functionally, binds to the 23S rRNA. The protein is Large ribosomal subunit protein uL15 of Beijerinckia indica subsp. indica (strain ATCC 9039 / DSM 1715 / NCIMB 8712).